Reading from the N-terminus, the 507-residue chain is ATP synthase subunit alpha (507 aa).

170-177 contacts ATP; that stretch reads GDRKTGKT.

The protein belongs to the ATPase alpha/beta chains family. As to quaternary structure, F-type ATPases have 2 components, CF(1) - the catalytic core - and CF(0) - the membrane proton channel. CF(1) has five subunits: alpha(3), beta(3), gamma(1), delta(1), epsilon(1). CF(0) has three main subunits: a(1), b(2) and c(9-12). The alpha and beta chains form an alternating ring which encloses part of the gamma chain. CF(1) is attached to CF(0) by a central stalk formed by the gamma and epsilon chains, while a peripheral stalk is formed by the delta and b chains.

The protein resides in the cell inner membrane. It carries out the reaction ATP + H2O + 4 H(+)(in) = ADP + phosphate + 5 H(+)(out). Its function is as follows. Produces ATP from ADP in the presence of a proton gradient across the membrane. The alpha chain is a regulatory subunit. This Anaplasma marginale (strain Florida) protein is ATP synthase subunit alpha.